The chain runs to 285 residues: tRNA U34 carboxymethyltransferase (285 aa).

Residues lysine 56, tryptophan 70, lysine 75, glycine 94, 143–144, tyrosine 163, and arginine 278 contribute to the carboxy-S-adenosyl-L-methionine site; that span reads VE.

This sequence belongs to the class I-like SAM-binding methyltransferase superfamily. CmoB family. Homotetramer.

It catalyses the reaction carboxy-S-adenosyl-L-methionine + 5-hydroxyuridine(34) in tRNA = 5-carboxymethoxyuridine(34) in tRNA + S-adenosyl-L-homocysteine + H(+). Functionally, catalyzes carboxymethyl transfer from carboxy-S-adenosyl-L-methionine (Cx-SAM) to 5-hydroxyuridine (ho5U) to form 5-carboxymethoxyuridine (cmo5U) at position 34 in tRNAs. The polypeptide is tRNA U34 carboxymethyltransferase (Campylobacter hominis (strain ATCC BAA-381 / DSM 21671 / CCUG 45161 / LMG 19568 / NCTC 13146 / CH001A)).